The following is a 485-amino-acid chain: MEKQVRVRYAPSPTGHLHIGNARTALFNYLFARHLDGKFIIRIEDTDVKRNVAGGEESQLKYLKWLGMDWDEGVDVGGEFGPYRQTERLDIYKKLYEDLLERGLAYKCYMTEEELEAEREGQIARGETPRYACNHRELTEEQVKEFEAEGRIPSIRFRVPANRDYTFKDIVKDEVAFHSNDFGDFVIVKKDGIPTYNFAVAVDDHLMEITHVLRGDDHISNTPKQMMIYEAFGWDIPQFGHMTLIVNESRKKLSKRDESIIQFIEQYKELGYLPEAIFNFIALLGWSPVGEEEIFSKDEFIKMFDAARLSKSPALFDSQKLKWMNNQYMKKQDLDTVVELSLPHLVKAGRVGETLSEQDQAWIRDVIALYHEQMSFGAEIVELSEMFFKDHVDYEEEGQEVLNGEQVPEVLRAFAGQIEALEVMEPAAIKAAIKAVQKETGHKGKNLFMPIRVATTGQTHGPELPNAIALLGKEKVLNRLQKVIG.

The 'HIGH' region signature appears at 11–21; sequence PSPTGHLHIGN. The 'KMSKS' region motif lies at 252-256; it reads KLSKR. K255 contacts ATP.

This sequence belongs to the class-I aminoacyl-tRNA synthetase family. Glutamate--tRNA ligase type 1 subfamily. In terms of assembly, monomer.

It localises to the cytoplasm. It catalyses the reaction tRNA(Glu) + L-glutamate + ATP = L-glutamyl-tRNA(Glu) + AMP + diphosphate. Its function is as follows. Catalyzes the attachment of glutamate to tRNA(Glu) in a two-step reaction: glutamate is first activated by ATP to form Glu-AMP and then transferred to the acceptor end of tRNA(Glu). This is Glutamate--tRNA ligase from Bacillus cereus (strain ATCC 14579 / DSM 31 / CCUG 7414 / JCM 2152 / NBRC 15305 / NCIMB 9373 / NCTC 2599 / NRRL B-3711).